A 126-amino-acid polypeptide reads, in one-letter code: Small ribosomal subunit protein uS12 (126 aa).

At aspartate 89 the chain carries 3-methylthioaspartic acid.

This sequence belongs to the universal ribosomal protein uS12 family. As to quaternary structure, part of the 30S ribosomal subunit. Contacts proteins S8 and S17. May interact with IF1 in the 30S initiation complex.

Its function is as follows. With S4 and S5 plays an important role in translational accuracy. In terms of biological role, interacts with and stabilizes bases of the 16S rRNA that are involved in tRNA selection in the A site and with the mRNA backbone. Located at the interface of the 30S and 50S subunits, it traverses the body of the 30S subunit contacting proteins on the other side and probably holding the rRNA structure together. The combined cluster of proteins S8, S12 and S17 appears to hold together the shoulder and platform of the 30S subunit. The protein is Small ribosomal subunit protein uS12 of Sulfurimonas denitrificans (strain ATCC 33889 / DSM 1251) (Thiomicrospira denitrificans (strain ATCC 33889 / DSM 1251)).